Consider the following 587-residue polypeptide: Polyadenylate-binding protein-interacting protein 3 (587 aa).

The region spanning 51-132 is the Sm domain; that stretch reads LLVYFTTCNI…LVQVIAKDLP (82 aa). Residues 422-503 form a disordered region; that stretch reads AKSENSSGWP…QSPQSPVFDG (82 aa). Positions 431–464 are enriched in low complexity; sequence PGSSISRNSENSAASSASNLPILSPSSSGSLSSE. A PAM2-like 1; degenerate motif is present at residues 467–475; that stretch reads TLNPNAKEF. Positions 476-486 match the PAM2-like 2 motif; it reads KLNPNAKSFKP. Residues 486–498 are compositionally biased toward polar residues; sequence PSPSATRPQSPQS.

The polypeptide is Polyadenylate-binding protein-interacting protein 3 (CID3) (Arabidopsis thaliana (Mouse-ear cress)).